We begin with the raw amino-acid sequence, 72 residues long: Protein CYSTEINE-RICH TRANSMEMBRANE MODULE 1 (72 aa).

Residues 1–11 show a composition bias toward polar residues; that stretch reads MSQYDHNQSAG. The interval 1-46 is disordered; the sequence is MSQYDHNQSAGANPPPPMSTCTSPPPPIGYPTNQPSHGSVAQGKVE. Residues 13–29 show a composition bias toward pro residues; sequence NPPPPMSTCTSPPPPIG. The helical transmembrane segment at 49–65 threads the bilayer; it reads SKGDGFFKGCLAAMCCC.

It belongs to the CYSTM1 family. In terms of assembly, heterodimers. Binds weakly to CYSTM7 and WIH1/CYSTM13. In terms of tissue distribution, mostly expressed in roots, flowers and siliques and, to a lower extent, in stems and leaves.

The protein resides in the cell membrane. It is found in the nucleus. Its function is as follows. May be involved in aluminium (Al) tolerance. Involved in resistance to abiotic stress. The sequence is that of Protein CYSTEINE-RICH TRANSMEMBRANE MODULE 1 from Arabidopsis thaliana (Mouse-ear cress).